Reading from the N-terminus, the 307-residue chain is 4-hydroxy-3-methylbut-2-enyl diphosphate reductase (307 aa).

Cysteine 13 contributes to the [4Fe-4S] cluster binding site. (2E)-4-hydroxy-3-methylbut-2-enyl diphosphate-binding residues include histidine 42 and histidine 75. The dimethylallyl diphosphate site is built by histidine 42 and histidine 75. The isopentenyl diphosphate site is built by histidine 42 and histidine 75. A [4Fe-4S] cluster-binding site is contributed by cysteine 97. Histidine 125 lines the (2E)-4-hydroxy-3-methylbut-2-enyl diphosphate pocket. Histidine 125 serves as a coordination point for dimethylallyl diphosphate. Histidine 125 lines the isopentenyl diphosphate pocket. Glutamate 127 acts as the Proton donor in catalysis. Residue threonine 165 coordinates (2E)-4-hydroxy-3-methylbut-2-enyl diphosphate. Cysteine 195 contacts [4Fe-4S] cluster. (2E)-4-hydroxy-3-methylbut-2-enyl diphosphate contacts are provided by serine 223, serine 224, asparagine 225, and serine 267. Dimethylallyl diphosphate contacts are provided by serine 223, serine 224, asparagine 225, and serine 267. Isopentenyl diphosphate is bound by residues serine 223, serine 224, asparagine 225, and serine 267.

Belongs to the IspH family. Requires [4Fe-4S] cluster as cofactor.

It carries out the reaction isopentenyl diphosphate + 2 oxidized [2Fe-2S]-[ferredoxin] + H2O = (2E)-4-hydroxy-3-methylbut-2-enyl diphosphate + 2 reduced [2Fe-2S]-[ferredoxin] + 2 H(+). The enzyme catalyses dimethylallyl diphosphate + 2 oxidized [2Fe-2S]-[ferredoxin] + H2O = (2E)-4-hydroxy-3-methylbut-2-enyl diphosphate + 2 reduced [2Fe-2S]-[ferredoxin] + 2 H(+). Its pathway is isoprenoid biosynthesis; dimethylallyl diphosphate biosynthesis; dimethylallyl diphosphate from (2E)-4-hydroxy-3-methylbutenyl diphosphate: step 1/1. The protein operates within isoprenoid biosynthesis; isopentenyl diphosphate biosynthesis via DXP pathway; isopentenyl diphosphate from 1-deoxy-D-xylulose 5-phosphate: step 6/6. Its function is as follows. Catalyzes the conversion of 1-hydroxy-2-methyl-2-(E)-butenyl 4-diphosphate (HMBPP) into a mixture of isopentenyl diphosphate (IPP) and dimethylallyl diphosphate (DMAPP). Acts in the terminal step of the DOXP/MEP pathway for isoprenoid precursor biosynthesis. In Chlamydia trachomatis serovar A (strain ATCC VR-571B / DSM 19440 / HAR-13), this protein is 4-hydroxy-3-methylbut-2-enyl diphosphate reductase.